The chain runs to 216 residues: Pyrrolidone-carboxylate peptidase (216 aa).

Catalysis depends on residues Glu-80, Cys-143, and His-168.

It belongs to the peptidase C15 family. Homotetramer.

It is found in the cytoplasm. The catalysed reaction is Release of an N-terminal pyroglutamyl group from a polypeptide, the second amino acid generally not being Pro.. Removes 5-oxoproline from various penultimate amino acid residues except L-proline. This is Pyrrolidone-carboxylate peptidase from Cupriavidus necator (strain ATCC 17699 / DSM 428 / KCTC 22496 / NCIMB 10442 / H16 / Stanier 337) (Ralstonia eutropha).